The primary structure comprises 673 residues: Pesticin receptor (673 aa).

Residues 1-22 (MKMTRLYPLALGGLLLPAIANA) form the signal peptide. The TonB box motif lies at 30 to 37 (STLVVTAS). One can recognise a TBDR plug domain in the interval 41–155 (SRSASANNVS…QGGIINIVTQ (115 aa)). The region spanning 160 to 672 (TPRGYIEGGV…TVGINTRIDF (513 aa)) is the TBDR beta-barrel domain. Positions 657–673 (QVNMGRTVGINTRIDFF) match the TonB C-terminal box motif.

The protein belongs to the TonB-dependent receptor family.

The protein localises to the cell outer membrane. Its function is as follows. Receptor for the bacteriocin pesticin and for the siderophore yersiniabactin. The protein is Pesticin receptor (fyuA) of Yersinia pestis.